Reading from the N-terminus, the 151-residue chain is UPF0208 membrane protein YPTB2595 (151 aa).

2 helical membrane passes run 46–66 (FGIRFMPPLAIFTLTWQIALG) and 69–89 (LGPAIATALFACGLPLQGLWW).

The protein belongs to the UPF0208 family.

It localises to the cell inner membrane. The chain is UPF0208 membrane protein YPTB2595 from Yersinia pseudotuberculosis serotype I (strain IP32953).